A 197-amino-acid polypeptide reads, in one-letter code: MKINKAEFVTSAVAPDHYPVHELPEVALAGRSNVGKSSFINKICQRKALARTSSKPGKTQTLNFFNINDEIMFVDVPGYGYAKVSKTEREKWGVMMEQYLTSQEALRGVVLLVDIRHDPTGDDVTMYNFLKHYEIPVIVVATKLDKIKKSQRQKHEAAVKRKLQFDPSDRFVAFSAETAEGKDEAWKAIYALITEGE.

The EngB-type G domain maps to 22–195 (ELPEVALAGR…WKAIYALITE (174 aa)). Residues 30–37 (GRSNVGKS), 57–61 (GKTQT), 75–78 (DVPG), 142–145 (TKLD), and 174–176 (FSA) contribute to the GTP site. Positions 37 and 59 each coordinate Mg(2+).

Belongs to the TRAFAC class TrmE-Era-EngA-EngB-Septin-like GTPase superfamily. EngB GTPase family. Requires Mg(2+) as cofactor.

Necessary for normal cell division and for the maintenance of normal septation. The chain is Probable GTP-binding protein EngB from Exiguobacterium sp. (strain ATCC BAA-1283 / AT1b).